Reading from the N-terminus, the 488-residue chain is Histone deacetylase 2 (488 aa).

A histone deacetylase region spans residues Lys-9–Asp-322. Residues Gly-28 and Lys-32 each contribute to the 1D-myo-inositol 1,4,5,6-tetrakisphosphate site. The residue at position 75 (Lys-75) is an N6-acetyllysine; alternate. Lys-75 participates in a covalent cross-link: Glycyl lysine isopeptide (Lys-Gly) (interchain with G-Cter in SUMO2); alternate. Residue His-142 is part of the active site. Residues Asp-175, Asp-177, His-179, Phe-188, Thr-191, Val-194, Ser-198, and Phe-199 each coordinate Ca(2+). Residues Asp-177 and His-179 each coordinate Zn(2+). Lys-221 carries the post-translational modification N6-acetyllysine. Position 223 (Tyr-223) interacts with Ca(2+). Position 262 is an S-nitrosocysteine (Cys-262). Zn(2+) is bound at residue Asp-265. Arg-271 lines the 1D-myo-inositol 1,4,5,6-tetrakisphosphate pocket. At Cys-274 the chain carries S-nitrosocysteine. The interval Ala-389–Pro-488 is disordered. 4 positions are modified to phosphoserine: Ser-394, Ser-407, Ser-422, and Ser-424. Positions Pro-402–Cys-417 are enriched in basic and acidic residues. Residues Asp-418–Gly-428 show a composition bias toward acidic residues. Residues Glu-429–Lys-481 show a composition bias toward basic and acidic residues. Residues Lys-439, Lys-452, Lys-458, Lys-462, Lys-478, and Lys-481 each participate in a glycyl lysine isopeptide (Lys-Gly) (interchain with G-Cter in SUMO2) cross-link.

It belongs to the histone deacetylase family. HD type 1 subfamily. Part of the core histone deacetylase (HDAC) complex composed of HDAC1, HDAC2, RBBP4 and RBBP7, the core complex associates with SIN3, SAP18 and SAP30 to form the SIN3 HDAC complex. Component of the nucleosome remodeling and deacetylase (NuRD) repressor complex, composed of core proteins MTA1, MTA2, MTA3, RBBP4, RBBP7, HDAC1, HDAC2, MBD2, MBD3, and peripherally associated proteins CDK2AP1, CDK2AP2, GATAD2A, GATAD2B, CHD3, CHD4 and CHD5. The exact stoichiometry of the NuRD complex is unknown, and some subunits such as MBD2 and MBD3, GATAD2A and GATAD2B, and CHD3, CHD4 and CHD5 define mutually exclusive NuRD complexes. Component of a RCOR/GFI/KDM1A/HDAC complex. Component of a BHC histone deacetylase complex that contains HDAC1, HDAC2, HMG20B, KDM1A, RCOR1 and PHF21A. The BHC complex may also contain ZMYM2, ZNF217, ZMYM3, GSE1 and GTF2I. Part of a complex containing the core histones H2A, H2B, H3 and H4, DEK and unphosphorylated DAXX. Part of a complex containing ATR and CHD4. Forms a heterologous complex at least with YY1. Interacts in the late S-phase of DNA-replication with DNMT1 in the other transcriptional repressor complex composed of DNMT1, DMAP1, PCNA, CAF1. Component of a mSin3A corepressor complex that contains SIN3A, SAP130, SUDS3, ARID4B, HDAC1 and HDAC2. Part of a complex composed of TRIM28, HDAC1, HDAC2 and EHMT2. Part of a complex containing at least CDYL, MIER1, MIER2, HDAC1 and HDAC2. Component of a histone deacetylase complex containing DNTTIP1, ZNF541, HDAC1 and HDAC2. Forms a complex comprising APPL1, RUVBL2, APPL2, CTNNB1 and HDAC1. Interacts directly with GFI1. Interacts directly with GFI1B. Interacts with APEX1; the interaction is not dependent on the acetylated status of APEX1. Interacts with ATR. Interacts with BCL6 (non-acetylated form). Interacts with BEND3. Interacts with CBFA2T3. Interacts with CDK2AP1. Interacts with CHD4. Interacts with CHD5. Interacts with CHFR. Interacts with CRY1. Interacts with DNMT1. Interacts with GATAD2A. Interacts with HCFC1. Interacts with HDAC7. Interacts with HDAC10. Interacts with INSM1. Interacts with KDM4A. Interacts with MACROH2A1 (via the non-histone region). Interacts with MBD3L2. Interacts with MTA1, with a preference for sumoylated MTA1. Interacts with NACC2. Interacts with NRIP1. Interacts with PELP1. Interacts with PIMREG. Interacts with PRDM6. Interacts with PWWP2B. Interacts with SAP30. Interacts with SAP30L. Interacts with SETDB1. Interacts with SIX3. Interacts with SMARCAD1. Interacts with SNW1. Interacts with SPHK2. Interacts with SPEN/MINT. Interacts (CK2 phosphorylated form) with SP3. Interacts with SUV39H1. Interacts with TSHZ3 (via its N-terminus). Interacts with ZMYND8. Interacts with ZNF431. Interacts with ZNF263; recruited to the SIX3 promoter along with other proteins involved in chromatin modification and transcriptional corepression where it contributes to transcriptional repression. Identified in a complex with HDAC1, KCTD19, DNTTIP1 and ZNF541. Component of the SIN3B complex, which includes SIN3B, HDAC2, PHF12 and MORF4L1; interacts directly with all subunits. Requires Zn(2+) as cofactor. Ca(2+) is required as a cofactor. In terms of processing, S-nitrosylated by GAPDH. In neurons, S-nitrosylation at Cys-262 and Cys-274 does not affect enzyme activity, but induces HDAC2 release from chromatin. This in turn increases acetylation of histones surrounding neurotrophin-dependent gene promoters and promotes their transcription. In embryonic cortical neurons, S-Nitrosylation regulates dendritic growth and branching. Widely expressed; lower levels in brain and lung.

It localises to the nucleus. The protein localises to the cytoplasm. The enzyme catalyses N(6)-acetyl-L-lysyl-[histone] + H2O = L-lysyl-[histone] + acetate. The catalysed reaction is N(6)-acetyl-L-lysyl-[protein] + H2O = L-lysyl-[protein] + acetate. It catalyses the reaction N(6)-(2E)-butenoyl-L-lysyl-[protein] + H2O = (2E)-2-butenoate + L-lysyl-[protein]. It carries out the reaction N(6)-(2-hydroxyisobutanoyl)-L-lysyl-[protein] + H2O = 2-hydroxy-2-methylpropanoate + L-lysyl-[protein]. The enzyme catalyses N(6)-[(S)-lactoyl]-L-lysyl-[protein] + H2O = (S)-lactate + L-lysyl-[protein]. Inositol tetraphosphate (1D-myo-inositol 1,4,5,6-tetrakisphosphate) may act as an intermolecular glue between HDAC2 and N-Cor repressor complex components. In terms of biological role, histone deacetylase that catalyzes the deacetylation of lysine residues on the N-terminal part of the core histones (H2A, H2B, H3 and H4). Histone deacetylation gives a tag for epigenetic repression and plays an important role in transcriptional regulation, cell cycle progression and developmental events. Histone deacetylases act via the formation of large multiprotein complexes. Forms transcriptional repressor complexes by associating with MAD, SIN3, YY1 and N-COR. Component of a RCOR/GFI/KDM1A/HDAC complex that suppresses, via histone deacetylase (HDAC) recruitment, a number of genes implicated in multilineage blood cell development. Acts as a component of the histone deacetylase NuRD complex which participates in the remodeling of chromatin. Component of the SIN3B complex that represses transcription and counteracts the histone acetyltransferase activity of EP300 through the recognition H3K27ac marks by PHF12 and the activity of the histone deacetylase HDAC2. Also deacetylates non-histone targets: deacetylates TSHZ3, thereby regulating its transcriptional repressor activity. May be involved in the transcriptional repression of circadian target genes, such as PER1, mediated by CRY1 through histone deacetylation. Involved in MTA1-mediated transcriptional corepression of TFF1 and CDKN1A. In addition to protein deacetylase activity, also acts as a protein-lysine deacylase by recognizing other acyl groups: catalyzes removal of (2E)-butenoyl (crotonyl), lactoyl (lactyl) and 2-hydroxyisobutanoyl (2-hydroxyisobutyryl) acyl groups from lysine residues, leading to protein decrotonylation, delactylation and de-2-hydroxyisobutyrylation, respectively. This is Histone deacetylase 2 from Homo sapiens (Human).